Reading from the N-terminus, the 474-residue chain is MSSFNPHLKFQSQAVAKPYFVFALILFVGQVLFGLIMGLQYVVGDFLFPLLPFNVARMVHTNLLIVWLLFGFMGAAYYLIPEESDCELHSPKLAIILFWVFAAAGVLTILGYLFVPYAALAEMTRNDLLPTMGREFLEQPTITKIGIVVVALGFLYNIGMTMLKGRKTVVSTVMMTGLIGLAVFFLFAFYNPENLSRDKFYWWFVVHLWVEGVWELIMGAMLAFVLIKVTGVDREVIEKWLYVIIAMALITGIIGTGHHFFWIGAPTVWLWVGSIFSALEPLPFFAMVLFALNMVNRRRREHPNKAASLWAIGTTVTAFLGAGVWGFMHTLAPVNYYTHGSQLTAAHGHLAFYGAYAMIVMTMISYAMPRLRGLGEAPDARAQRIEVWGFWLMTISMIAITLFLTAAGVVQIWLQRIPADGAAMSFMNTADQLAIFFWLRFIAGVFFLIGLVCYLYSFRQRGRVPVVVAAPAAA.

The helical transmembrane segment at 19–39 (YFVFALILFVGQVLFGLIMGL) threads the bilayer. Heme b is bound at residue His-60. A run of 8 helical transmembrane segments spans residues 61-81 (TNLL…YLIP), 95-115 (IILF…YLFV), 145-165 (IGIV…MLKG), 169-189 (VVST…LFAF), 207-227 (HLWV…FVLI), 243-263 (VIIA…FFWI), 270-290 (LWVG…MVLF), and 308-328 (SLWA…WGFM). Residues His-207, His-258, and His-259 each coordinate Fe cation. Residues His-347 and His-349 each coordinate heme b. 3 helical membrane-spanning segments follow: residues 348–368 (GHLA…SYAM), 390–410 (FWLM…AGVV), and 433–453 (LAIF…GLVC).

Belongs to the heme-copper respiratory oxidase family. In terms of assembly, heterodimer of cytochromes b (large subunit) and c (small subunit).

The protein localises to the cell membrane. The catalysed reaction is nitrous oxide + 2 Fe(III)-[cytochrome c] + H2O = 2 nitric oxide + 2 Fe(II)-[cytochrome c] + 2 H(+). Its pathway is nitrogen metabolism; nitrate reduction (denitrification); dinitrogen from nitrate: step 3/4. Its function is as follows. Component of the anaerobic respiratory chain that transforms nitrate to dinitrogen (denitrification). NorB is the catalytic subunit of the enzyme complex. Shows proton pump activity across the membrane in denitrifying bacterial cells. The mononitrogen reduction is probably coupled to electron transport phosphorylation. The chain is Nitric oxide reductase subunit B (norB) from Stutzerimonas stutzeri (Pseudomonas stutzeri).